The primary structure comprises 457 residues: MDEYIPFDDIVRQYDPDYTGKVSIQAFLEIVDDVDALRLNPEAPLLDNEQRQSAQDFIKDNSEIVVSTSEIKNLFYELTGLDPDTLPVNKLALRENGVLPRKSVAKPQKISENRIKRKDMFYQDASYITPRKGSPLSHSTPLSMFRTKNEYGSNKGFSHINKENADDSLIQQLYERIELQAAELRSKDEQVKELNARNAKLLEELDSSEEACKSCYTQAKTWEKKFREALRDSKEYAAQLQTIHEEYEQQQAHIVRMEELIHAVEKERKTETDYMKKESLSEQKERGAFMESNMILEEKVAHLQLENEQLRLFFKEKAPQPFQNHPPYQNLKITFPSPFFHIPYIPKTETLNDSQFAAGLSLLASELESQKNLLKKFENLKKKSSKDFLSPSTILSNAFSKVSLPNSLILRVLFFSLLFIIGIHIFYFLFFHVATIQQWPFLFWLPSTKFDNRWSPT.

Ser134 carries the phosphoserine modification.

In terms of assembly, interacts with sad1.

The protein localises to the cytoplasm. It localises to the cytoskeleton. Its subcellular location is the microtubule organizing center. The protein resides in the spindle pole body. In Schizosaccharomyces pombe (strain 972 / ATCC 24843) (Fission yeast), this protein is Karyogamy meiotic segregation protein 2 (kms2).